Here is an 89-residue protein sequence, read N- to C-terminus: Long neurotoxin homolog TA-bm16 (89 aa).

A signal peptide spans 1–21 (MKTLLLTLVVVTIVCLDLGYT). 5 disulfides stabilise this stretch: C24–C45, C27–C32, C38–C66, C70–C81, and C82–C87.

The protein belongs to the three-finger toxin family. Ancestral subfamily. Orphan group V sub-subfamily. As to expression, expressed by the venom gland.

It localises to the secreted. In terms of biological role, exhibits M2 muscarinic acetylcholine receptor (CHRM2)-blocking activity, but has a weak binding activity toward nicotinic AChR. Moreover, it inhibits collagen-induced platelet aggregation. The chain is Long neurotoxin homolog TA-bm16 from Bungarus multicinctus (Many-banded krait).